We begin with the raw amino-acid sequence, 1201 residues long: DNA-directed RNA polymerase subunit beta' (1201 aa).

Residues Cys-60, Cys-62, Cys-75, and Cys-78 each coordinate Zn(2+). Residues Asp-449, Asp-451, and Asp-453 each contribute to the Mg(2+) site. Zn(2+) is bound by residues Cys-818, Cys-892, Cys-899, and Cys-902.

It belongs to the RNA polymerase beta' chain family. The RNAP catalytic core consists of 2 alpha, 1 beta, 1 beta' and 1 omega subunit. When a sigma factor is associated with the core the holoenzyme is formed, which can initiate transcription. Mg(2+) is required as a cofactor. Zn(2+) serves as cofactor.

The enzyme catalyses RNA(n) + a ribonucleoside 5'-triphosphate = RNA(n+1) + diphosphate. In terms of biological role, DNA-dependent RNA polymerase catalyzes the transcription of DNA into RNA using the four ribonucleoside triphosphates as substrates. The protein is DNA-directed RNA polymerase subunit beta' of Listeria monocytogenes serovar 1/2a (strain ATCC BAA-679 / EGD-e).